The sequence spans 327 residues: tRNA dimethylallyltransferase (327 aa).

14–21 (GPTASGKT) provides a ligand contact to ATP. Position 16 to 21 (16 to 21 (TASGKT)) interacts with substrate. Interaction with substrate tRNA stretches follow at residues 39-42 (DSAL) and 163-167 (QRIQR).

It belongs to the IPP transferase family. As to quaternary structure, monomer. Mg(2+) is required as a cofactor.

The catalysed reaction is adenosine(37) in tRNA + dimethylallyl diphosphate = N(6)-dimethylallyladenosine(37) in tRNA + diphosphate. Functionally, catalyzes the transfer of a dimethylallyl group onto the adenine at position 37 in tRNAs that read codons beginning with uridine, leading to the formation of N6-(dimethylallyl)adenosine (i(6)A). The protein is tRNA dimethylallyltransferase of Xanthomonas oryzae pv. oryzae (strain MAFF 311018).